A 428-amino-acid polypeptide reads, in one-letter code: Tryptophan synthase beta chain (428 aa).

Lys100 carries the post-translational modification N6-(pyridoxal phosphate)lysine.

It belongs to the TrpB family. Tetramer of two alpha and two beta chains. The cofactor is pyridoxal 5'-phosphate.

It carries out the reaction (1S,2R)-1-C-(indol-3-yl)glycerol 3-phosphate + L-serine = D-glyceraldehyde 3-phosphate + L-tryptophan + H2O. It functions in the pathway amino-acid biosynthesis; L-tryptophan biosynthesis; L-tryptophan from chorismate: step 5/5. In terms of biological role, the beta subunit is responsible for the synthesis of L-tryptophan from indole and L-serine. The protein is Tryptophan synthase beta chain of Streptomyces griseus subsp. griseus (strain JCM 4626 / CBS 651.72 / NBRC 13350 / KCC S-0626 / ISP 5235).